We begin with the raw amino-acid sequence, 160 residues long: Transcription antitermination protein NusB (160 aa).

This sequence belongs to the NusB family.

Functionally, involved in transcription antitermination. Required for transcription of ribosomal RNA (rRNA) genes. Binds specifically to the boxA antiterminator sequence of the ribosomal RNA (rrn) operons. The polypeptide is Transcription antitermination protein NusB (Chlamydia pneumoniae (Chlamydophila pneumoniae)).